A 201-amino-acid polypeptide reads, in one-letter code: 3-isopropylmalate dehydratase small subunit (201 aa).

Belongs to the LeuD family. LeuD type 1 subfamily. Heterodimer of LeuC and LeuD.

It catalyses the reaction (2R,3S)-3-isopropylmalate = (2S)-2-isopropylmalate. It functions in the pathway amino-acid biosynthesis; L-leucine biosynthesis; L-leucine from 3-methyl-2-oxobutanoate: step 2/4. Its function is as follows. Catalyzes the isomerization between 2-isopropylmalate and 3-isopropylmalate, via the formation of 2-isopropylmaleate. The sequence is that of 3-isopropylmalate dehydratase small subunit from Buchnera aphidicola subsp. Baizongia pistaciae (strain Bp).